Here is a 514-residue protein sequence, read N- to C-terminus: ATP synthase subunit alpha (514 aa).

Residue 170 to 177 (GDRQIGKT) coordinates ATP.

It belongs to the ATPase alpha/beta chains family. In terms of assembly, F-type ATPases have 2 components, CF(1) - the catalytic core - and CF(0) - the membrane proton channel. CF(1) has five subunits: alpha(3), beta(3), gamma(1), delta(1), epsilon(1). CF(0) has three main subunits: a(1), b(2) and c(9-12). The alpha and beta chains form an alternating ring which encloses part of the gamma chain. CF(1) is attached to CF(0) by a central stalk formed by the gamma and epsilon chains, while a peripheral stalk is formed by the delta and b chains.

The protein resides in the cell inner membrane. The catalysed reaction is ATP + H2O + 4 H(+)(in) = ADP + phosphate + 5 H(+)(out). Functionally, produces ATP from ADP in the presence of a proton gradient across the membrane. The alpha chain is a regulatory subunit. The polypeptide is ATP synthase subunit alpha (Pseudomonas putida (strain GB-1)).